The sequence spans 211 residues: Probable oligoribonuclease (211 aa).

Residues 38-202 (IVWMDLEMTG…DDIRESIKEL (165 aa)) enclose the Exonuclease domain. Tyr159 is an active-site residue.

The protein belongs to the oligoribonuclease family.

Its function is as follows. 3'-to-5' exoribonuclease specific for small oligoribonucleotides. In Drosophila melanogaster (Fruit fly), this protein is Probable oligoribonuclease.